Reading from the N-terminus, the 495-residue chain is RNA-binding KH domain-containing protein PEPPER (495 aa).

KH domains lie at aspartate 73–valine 140, phenylalanine 165–isoleucine 234, and glutamine 340–isoleucine 403. The segment at glycine 474–leucine 495 is disordered.

In terms of assembly, interacts with HUA1 and HEN4. Detected in roots, shoots, leaves, flowers and fruits.

The protein resides in the nucleus. Its function is as follows. Regulates vegetative and gynoecium development. In concert with HUA2, antagonizes FLK by positively regulating FLC probably at transcriptional and post-transcriptional levels, and thus acts as a negative regulator of flowering. This Arabidopsis thaliana (Mouse-ear cress) protein is RNA-binding KH domain-containing protein PEPPER.